Reading from the N-terminus, the 491-residue chain is MNSPTMKSEQLTPKLSPMSFCLDDQRNAGSFQNLLNSPTKLKLDTGPIGNSLLYPTSLSKLSELSRGGRSKQRRGSDTMRSVSPIRFQFLNNTPKMLKPEYLSQTTSNLPLLSALLKNSKKTTSEGQNSNPDPLNIEKNIIKQSIKDKLEQLRSSESVAQVQKKERNPPSFEAKVCAEEPILRKNAEGLLPSYVPVPATPLEDPENHGVRKVEDKGLRVVSGGSTQCLSTEVNELPKDLNLDNLPTDNNGFVQYGLKGNNNNNRYSFISSTSTDYEPEWCDGQQHISMQMASMANAEEANSREKSNLDIKIKQLELEITELKLQNEKLVHSMTTNRYIEERFMLEVMKDPSIQAQRSQRDIERKVKQLEKKFFNCKKVLKKLTESSAVVATSTSKTEGNSARIPCPKTRLARVSVLDLKKIEEQPDSSSGTSSEEDHLTNDDTDANTSEDLNVAFEEEPTSAISTTASVQSGESKRGFQLNLPVQVEKKEK.

A Phosphothreonine modification is found at Thr-12. A phosphoserine mark is found at Ser-16 and Ser-37. The stretch at 295-384 (NAEEANSREK…CKKVLKKLTE (90 aa)) forms a coiled coil. Residues 300–439 (NSREKSNLDI…GTSSEEDHLT (140 aa)) form an interaction with MYO2 region. Positions 419-491 (KKIEEQPDSS…LPVQVEKKEK (73 aa)) are disordered. Over residues 461–472 (SAISTTASVQSG) the composition is skewed to polar residues.

Interacts with MYO2 and PCL7. In terms of processing, phosphorylated by the cyclin-CDK PCL7-PHO85.

The protein localises to the bud tip. It is found in the bud neck. It localises to the mitochondrion outer membrane. In terms of biological role, involved in the guiding of mitochondrial tubules to the bud tip during cell division. The polypeptide is Mitochondrial MYO2 receptor-related protein 1 (MMR1) (Saccharomyces cerevisiae (strain ATCC 204508 / S288c) (Baker's yeast)).